The primary structure comprises 1415 residues: Zygote defective protein 9 (1415 aa).

TOG regions lie at residues M1–A250 and P251–A530. A coiled-coil region spans residues D21–R48. HEAT repeat units lie at residues Q30–K68, S95–S132, T135–P172, and V179–L217. The interval A243–V278 is disordered. A compositionally biased stretch (low complexity) spans P255 to A276. HEAT repeat units follow at residues A339 to T377, P381 to L418, A420 to P457, and L464 to L502. Residues A544–E603 are disordered. Residues E562–E572 show a composition bias toward acidic residues. The TOG 3 stretch occupies residues A602 to V867. HEAT repeat units lie at residues I706–G743, V764–I801, and L804–D841. Residues V867–D914 are disordered.

This sequence belongs to the TOG/XMAP215 family. As to quaternary structure, interacts with tac-1 to form a heterodimer.

It is found in the cytoplasm. The protein resides in the cytoskeleton. Its subcellular location is the spindle pole. It localises to the microtubule organizing center. The protein localises to the centrosome. Functionally, plays a major role in organizing microtubules and spindle poles during mitosis and meiosis in one-cell stage embryos. Required for default nucleus positioning in oocytes. The chain is Zygote defective protein 9 from Caenorhabditis elegans.